Here is a 231-residue protein sequence, read N- to C-terminus: 2,3-bisphosphoglycerate-dependent phosphoglycerate mutase (231 aa).

Residues 8–15 (RHGESEWN), 21–22 (TG), Arg-60, 87–90 (ERHY), Lys-98, 114–115 (RR), and 183–184 (GN) contribute to the substrate site. The active-site Tele-phosphohistidine intermediate is His-9. Glu-87 (proton donor/acceptor) is an active-site residue.

Belongs to the phosphoglycerate mutase family. BPG-dependent PGAM subfamily.

It catalyses the reaction (2R)-2-phosphoglycerate = (2R)-3-phosphoglycerate. It functions in the pathway carbohydrate degradation; glycolysis; pyruvate from D-glyceraldehyde 3-phosphate: step 3/5. Functionally, catalyzes the interconversion of 2-phosphoglycerate and 3-phosphoglycerate. This is 2,3-bisphosphoglycerate-dependent phosphoglycerate mutase from Streptococcus pyogenes serotype M49 (strain NZ131).